The sequence spans 445 residues: UPF0210 protein SPT_0285 (445 aa).

It belongs to the UPF0210 family. Homodimer.

This Streptococcus pneumoniae (strain Taiwan19F-14) protein is UPF0210 protein SPT_0285.